The chain runs to 358 residues: Feruloyl CoA ortho-hydroxylase F6H1-2 (358 aa).

Residues 200 to 308 form the Fe2OG dioxygenase domain; it reads TKESLLMGSK…RISVPIFVNP (109 aa). Residue Tyr216 coordinates 2-oxoglutarate. Fe cation-binding residues include His231, Asp233, and His289. Positions 299 and 301 each coordinate 2-oxoglutarate.

The protein belongs to the iron/ascorbate-dependent oxidoreductase family. It depends on L-ascorbate as a cofactor. Requires Fe(2+) as cofactor. Expressed at low levels in tubers, underground stems, leaves and petioles.

It catalyses the reaction (E)-feruloyl-CoA + 2-oxoglutarate + O2 = (E)-6-hydroxyferuloyl-CoA + succinate + CO2. The protein operates within phenylpropanoid metabolism. Its function is as follows. 2-oxoglutarate (OG)- and Fe(II)-dependent dioxygenase (2OGD) involved in scopoletin biosynthesis. Converts feruloyl CoA into 6'-hydroxyferuloyl CoA, and, at low efficiency, caffeoyl-CoA into 6'-hydroxycaffeate, but has no activity with p-coumaroyl-CoA. The polypeptide is Feruloyl CoA ortho-hydroxylase F6H1-2 (Ipomoea batatas (Sweet potato)).